The chain runs to 506 residues: MNVFFTFSLLFLAALGSCADDRNPLEECFRETDYEEFLEIAKNGLSTTSNPKRVVIVGAGMSGLSAAYVLANAGHQVTVLEASERAGGRVKTYRNEKEGWYANLGPMRLPEKHRIVREYIRKFDLQLNEFSQENENAWYFIKNIRKRVGEVNKDPGVLEYPVKPSEVGKSAGQLYEESLQKAVEELRRTNCSYMLNKYDTYSTKEYLLKEGNLSPGAVDMIGDLLNEDSGYYVSFIESLKHDDIFAYEKRFDEIVGGMDKLPTSMYQAIQEKVHLNARVIKIQQDVKEVTVTYQTSEKETLSVTADYVIVCTTSRAARRIKFEPPLPPKKAHALRSVHYRSGTKIFLTCTKKFWEDDGIHGGKSTTDLPSRFIYYPNHNFPNGVGVIIAYGIGDDANYFQALDFEDCGDIVINDLSLIHQLPKEEIQAICRPSMIQRWSLDKYAMGGITTFTPYQFQHFSEALTAPVDRIYFAGEYTAQAHGWIDSTIKSGLRAARDVNRASEIKK.

Positions 1–18 (MNVFFTFSLLFLAALGSC) are cleaved as a signal peptide. Cysteine 28 and cysteine 191 are disulfide-bonded. Residue glutamate 36 participates in Zn(2+) binding. FAD-binding positions include 61-62 (MS), serine 62, 81-82 (EA), arginine 89, and 105-108 (GPMR). Arginine 108 contacts substrate. Positions 111, 118, and 150 each coordinate Zn(2+). Asparagine 190 carries N-linked (GlcNAc...) asparagine glycosylation. Aspartate 219 contributes to the Zn(2+) binding site. Histidine 241 is a binding site for substrate. A Zn(2+)-binding site is contributed by glutamate 248. Valine 279 provides a ligand contact to FAD. Positions 299 and 332 each coordinate Zn(2+). An intrachain disulfide couples cysteine 349 to cysteine 430. Tyrosine 390 lines the substrate pocket. Residue histidine 458 coordinates Zn(2+). FAD contacts are provided by residues glutamate 475 and 482–487 (GWIDST). 482 to 483 (GW) serves as a coordination point for substrate.

This sequence belongs to the flavin monoamine oxidase family. FIG1 subfamily. Homodimer; non-covalently linked. Stabilized by a single zinc-binding site located at the dimer interface (Asp-219, His-332 and His-458). Other zinc-bind sites can be understood as transient and non-specific, and appear due to the high concentration of zinc ions used in the crystallization experiments. FAD serves as cofactor. In terms of tissue distribution, expressed by the venom gland.

It is found in the secreted. It catalyses the reaction an L-alpha-amino acid + O2 + H2O = a 2-oxocarboxylate + H2O2 + NH4(+). It carries out the reaction L-leucine + O2 + H2O = 4-methyl-2-oxopentanoate + H2O2 + NH4(+). The enzyme catalyses L-phenylalanine + O2 + H2O = 3-phenylpyruvate + H2O2 + NH4(+). The catalysed reaction is L-tryptophan + O2 + H2O = indole-3-pyruvate + H2O2 + NH4(+). It catalyses the reaction L-methionine + O2 + H2O = 4-methylsulfanyl-2-oxobutanoate + H2O2 + NH4(+). It carries out the reaction L-isoleucine + O2 + H2O = (S)-3-methyl-2-oxopentanoate + H2O2 + NH4(+). The enzyme catalyses L-tyrosine + O2 + H2O = 3-(4-hydroxyphenyl)pyruvate + H2O2 + NH4(+). Catalyzes an oxidative deamination of predominantly hydrophobic and aromatic L-amino acids, thus producing hydrogen peroxide that may contribute to the diverse toxic effects of this enzyme. Shows high catalytic activity against L-Met, L-Leu, L-Phe, L-Trp, L-Tyr, L-Ile. Shows no or weak activity on L-Cys, L-Val, L-Gln, L-Thr, L-Ser, L-Lys, L-Arg, L-Asn, L-Glu, L-Gly, L-Pro, L-Asp and L-His. Induces platelet aggregation in platelet-rich plasma, probably due to hydrogen peroxide production, since catalase inhibits aggregation effect. Induces moderate mouse paw edema. Induces apoptosis and shows cytotoxicity against several cancer cell lines, which is inhibited by catalase. Shows hemolytic activity and antibacterial activities against both Gram-positive and Gram-negative bacteria. Has parasiticidal activities against both trypanosomes and leishmania, as a result of enzyme-catalyzed hydrogen peroxide production. Unlike other snake venom L-amino acid oxidases, does not induce hemorrhage (with 50 ug of enzyme). This Bothrops atrox (Barba amarilla) protein is L-amino-acid oxidase.